The sequence spans 642 residues: Threonine--tRNA ligase (642 aa).

The region spanning methionine 1–threonine 61 is the TGS domain. A catalytic region spans residues aspartate 243–proline 534. The Zn(2+) site is built by cysteine 334, histidine 385, and histidine 511.

It belongs to the class-II aminoacyl-tRNA synthetase family. As to quaternary structure, homodimer. Zn(2+) is required as a cofactor.

It localises to the cytoplasm. The catalysed reaction is tRNA(Thr) + L-threonine + ATP = L-threonyl-tRNA(Thr) + AMP + diphosphate + H(+). Functionally, catalyzes the attachment of threonine to tRNA(Thr) in a two-step reaction: L-threonine is first activated by ATP to form Thr-AMP and then transferred to the acceptor end of tRNA(Thr). Also edits incorrectly charged L-seryl-tRNA(Thr). The protein is Threonine--tRNA ligase of Shewanella woodyi (strain ATCC 51908 / MS32).